Here is a 176-residue protein sequence, read N- to C-terminus: SsrA-binding protein (176 aa).

A disordered region spans residues 1-33 (MTEAGAKKAAGKKSGKGKGKNAKKNQPNITPVA). Basic residues predominate over residues 9 to 23 (AAGKKSGKGKGKNAK).

It belongs to the SmpB family.

The protein localises to the cytoplasm. Functionally, required for rescue of stalled ribosomes mediated by trans-translation. Binds to transfer-messenger RNA (tmRNA), required for stable association of tmRNA with ribosomes. tmRNA and SmpB together mimic tRNA shape, replacing the anticodon stem-loop with SmpB. tmRNA is encoded by the ssrA gene; the 2 termini fold to resemble tRNA(Ala) and it encodes a 'tag peptide', a short internal open reading frame. During trans-translation Ala-aminoacylated tmRNA acts like a tRNA, entering the A-site of stalled ribosomes, displacing the stalled mRNA. The ribosome then switches to translate the ORF on the tmRNA; the nascent peptide is terminated with the 'tag peptide' encoded by the tmRNA and targeted for degradation. The ribosome is freed to recommence translation, which seems to be the essential function of trans-translation. This chain is SsrA-binding protein, found in Rhodopirellula baltica (strain DSM 10527 / NCIMB 13988 / SH1).